The chain runs to 966 residues: Glycine dehydrogenase (decarboxylating) (966 aa).

The residue at position 713 (K713) is an N6-(pyridoxal phosphate)lysine.

It belongs to the GcvP family. As to quaternary structure, the glycine cleavage system is composed of four proteins: P, T, L and H. Pyridoxal 5'-phosphate serves as cofactor.

It catalyses the reaction N(6)-[(R)-lipoyl]-L-lysyl-[glycine-cleavage complex H protein] + glycine + H(+) = N(6)-[(R)-S(8)-aminomethyldihydrolipoyl]-L-lysyl-[glycine-cleavage complex H protein] + CO2. Functionally, the glycine cleavage system catalyzes the degradation of glycine. The P protein binds the alpha-amino group of glycine through its pyridoxal phosphate cofactor; CO(2) is released and the remaining methylamine moiety is then transferred to the lipoamide cofactor of the H protein. This chain is Glycine dehydrogenase (decarboxylating), found in Shewanella halifaxensis (strain HAW-EB4).